The chain runs to 326 residues: Lipid droplet-associated hydrolase (326 aa).

The active-site Nucleophile is Ser140. Active-site charge relay system residues include Asp272 and His301.

It belongs to the AB hydrolase superfamily. LDAH family. Expressed in liver, adrenal gland, prostate, spleen, kidney, brown and white adipose tissue, testis and to a lesser extent in brain (at protein level). Expressed in peritoneal macrophages and bone marrow-derived macrophages (at protein level). Highly expressed in macrophage and foam cell-rich areas in atherosclerotic lesions (at protein level). mRNA, but no protein, expressed in heart and muscle.

The protein localises to the lipid droplet. It localises to the endoplasmic reticulum. The catalysed reaction is a cholesterol ester + H2O = cholesterol + a fatty acid + H(+). In terms of biological role, probable serine lipid hydrolase associated with lipid droplets. Has low cholesterol esterase activity. Appears to lack triglyceride lipase activity. Involved in cholesterol and triglyceride homeostasis; stimulates cellular triglyceride accumulation and cellular cholesterol release. Acts antagonistically with PNPLA2/ATGL in regulation of cellular lipid stores. May regulate triglyceride accumulation indirectly through stimulation of PNPLA2/ATGL ubiquitination and proteasomal degradation. Promotes microtubule-dependent lipid droplet fusion. Highly expressed in macrophage-rich areas in atherosclerotic lesions, suggesting that it could promote cholesterol ester turnover in macrophages. Functionally, stimulates cellular triglyceride accumulation and lipid droplet fusion. Associates with lipid droplets but does not stimulate cellular triglyceride accumulation, lipid droplet fusion or ATGL proteasomal degradation. The sequence is that of Lipid droplet-associated hydrolase from Mus musculus (Mouse).